The chain runs to 315 residues: 4-diphosphocytidyl-2-C-methyl-D-erythritol kinase (315 aa).

Residue K11 is part of the active site. 99 to 109 (PMAAGLAGGSA) is an ATP binding site. D141 is a catalytic residue.

Belongs to the GHMP kinase family. IspE subfamily.

It carries out the reaction 4-CDP-2-C-methyl-D-erythritol + ATP = 4-CDP-2-C-methyl-D-erythritol 2-phosphate + ADP + H(+). It functions in the pathway isoprenoid biosynthesis; isopentenyl diphosphate biosynthesis via DXP pathway; isopentenyl diphosphate from 1-deoxy-D-xylulose 5-phosphate: step 3/6. In terms of biological role, catalyzes the phosphorylation of the position 2 hydroxy group of 4-diphosphocytidyl-2C-methyl-D-erythritol. In Synechocystis sp. (strain ATCC 27184 / PCC 6803 / Kazusa), this protein is 4-diphosphocytidyl-2-C-methyl-D-erythritol kinase.